The primary structure comprises 121 residues: Chromosome transmission fidelity protein 8 homolog (121 aa).

This sequence belongs to the CTF8 family. Component of the CTF18-RFC complex, which consists of CTF18, CTF8, DSCC1, RFC2, RFC3, RFC4 and RFC5. The CTF18-RFC complex does not interact with the Rad9/Rad1/Hus1 complex. The CTF18-RFC complex interacts with POLH. CTF18/CTF8/DSCC1 associate with PCNA. CTF8 exists as a dimer with DSCC1.

Its subcellular location is the nucleus. Chromosome cohesion factor involved in sister chromatid cohesion and fidelity of chromosome transmission. Component of one of the cell nuclear antigen loader complexes, CTF18-replication factor C (CTF18-RFC), which consists of CTF18, CTF8, DSCC1, RFC2, RFC3, RFC4 and RFC5. The CTF18-RFC complex binds to single-stranded and primed DNAs and has weak ATPase activity that is stimulated the presence of primed DNA, replication protein A (RPA) and proliferating cell nuclear antigen (PCNA). The CTF18-RFC complex catalyzes the ATP-dependent loading of PCNA onto primed and gapped DNA. It also interacts with and stimulates POLH, which is suggestive of a protein network that coordinates DNA repair, recombination and chromosome cohesion reactions with replication fork progression. This is Chromosome transmission fidelity protein 8 homolog from Homo sapiens (Human).